The primary structure comprises 120 residues: Small ribosomal subunit protein bS6 (120 aa).

Belongs to the bacterial ribosomal protein bS6 family.

Its function is as follows. Binds together with bS18 to 16S ribosomal RNA. The polypeptide is Small ribosomal subunit protein bS6 (Blochmanniella floridana).